A 236-amino-acid polypeptide reads, in one-letter code: MSIHISAKQGDIADKILLPGDPLRAKFIAENFLEDAVCFNEVRNMFGYTGTYKGERVSVMGTGMGMPSISIYARELIVDYGVKKLIRVGTAGSLNENVHVRELVLAQAAATNSNIIRNDWPQYDFPQIANFNLLDKAYHIAKNFGMTTHVGNVLSSDVFYSNYFEKNIELGKWGVKAVEMEAAALYYLAAQHQVDALAIMTISDSLVNPDEDTTAEERQNTFTDMMKVGLETLIAD.

Residue histidine 4 participates in a purine D-ribonucleoside binding. Residues glycine 20, arginine 24, arginine 43, and 87 to 90 (RVGT) contribute to the phosphate site. Residues 179 to 181 (EME) and 203 to 204 (SD) each bind a purine D-ribonucleoside. The active-site Proton donor is aspartate 204.

This sequence belongs to the PNP/UDP phosphorylase family. As to quaternary structure, homohexamer; trimer of homodimers.

It carries out the reaction a purine D-ribonucleoside + phosphate = a purine nucleobase + alpha-D-ribose 1-phosphate. It catalyses the reaction a purine 2'-deoxy-D-ribonucleoside + phosphate = a purine nucleobase + 2-deoxy-alpha-D-ribose 1-phosphate. In terms of biological role, catalyzes the reversible phosphorolytic breakdown of the N-glycosidic bond in the beta-(deoxy)ribonucleoside molecules, with the formation of the corresponding free purine bases and pentose-1-phosphate. The chain is Purine nucleoside phosphorylase DeoD-type from Streptococcus thermophilus (strain ATCC BAA-491 / LMD-9).